The following is a 280-amino-acid chain: Putative protein-tyrosine sulfotransferase (280 aa).

Residue 16–20 (RSGTT) coordinates 3'-phosphoadenylyl sulfate. Cysteines 34 and 89 form a disulfide. E37 serves as the catalytic Proton donor/acceptor. N57 carries N-linked (GlcNAc...) asparagine glycosylation. 3'-phosphoadenylyl sulfate contacts are provided by R116, S124, and R128. A glycan (N-linked (GlcNAc...) asparagine) is linked at N136. Cysteines 158 and 165 form a disulfide. 3'-phosphoadenylyl sulfate contacts are provided by residues Y170 and 215-224 (SASQVKNSIN).

It belongs to the protein sulfotransferase family.

The catalysed reaction is L-tyrosyl-[protein] + 3'-phosphoadenylyl sulfate = O-sulfo-L-tyrosine-[protein] + adenosine 3',5'-bisphosphate + H(+). Its function is as follows. Catalyzes the O-sulfation of tyrosine residues within acidic motifs of polypeptides, using 3'-phosphoadenylyl sulfate (PAPS) as cosubstrate. The polypeptide is Putative protein-tyrosine sulfotransferase (Caenorhabditis briggsae).